Here is a 325-residue protein sequence, read N- to C-terminus: Fructose-1,6-bisphosphatase class 1 (325 aa).

Mg(2+) contacts are provided by E84, D103, L105, and D106. Residues 106–109 (DGSS), N196, and K262 contribute to the substrate site. Position 268 (E268) interacts with Mg(2+).

This sequence belongs to the FBPase class 1 family. As to quaternary structure, homotetramer. It depends on Mg(2+) as a cofactor.

It is found in the cytoplasm. It carries out the reaction beta-D-fructose 1,6-bisphosphate + H2O = beta-D-fructose 6-phosphate + phosphate. It participates in carbohydrate biosynthesis; gluconeogenesis. In Shewanella baltica (strain OS195), this protein is Fructose-1,6-bisphosphatase class 1.